A 202-amino-acid chain; its full sequence is Cytochrome c oxidase assembly protein CtaG (202 aa).

The Cytoplasmic segment spans residues 1 to 13 (MSDKAAAPKKQGR). Residues 14 to 36 (NNGAVVLMCLSFVFGMGAMSYAA) traverse the membrane as a helical; Signal-anchor for type II membrane protein segment. Residues 37–202 (VPLYRIFCQV…GGAEKVEKKL (166 aa)) are Periplasmic-facing. Positions 183-202 (EGPKPLASNEGGAEKVEKKL) are disordered.

Belongs to the COX11/CtaG family.

It localises to the cell inner membrane. In terms of biological role, exerts its effect at some terminal stage of cytochrome c oxidase synthesis, probably by being involved in the insertion of the copper B into subunit I. The polypeptide is Cytochrome c oxidase assembly protein CtaG (Rhizobium etli (strain CIAT 652)).